The sequence spans 477 residues: UDP-N-acetylglucosamine pyrophosphorylase (477 aa).

The short motif at 109-112 is the Substrate binding element; the sequence is MAGG. UTP is bound by residues 109–112, K123, and Q194; that span reads MAGG. A Phosphoserine modification is found at S218. Residue G221 coordinates UTP. N222 lines the substrate pocket. A UTP-binding site is contributed by D252. Residues 302–303 carry the Substrate binding motif; it reads EY. Residue K377 coordinates UTP. A substrate-binding site is contributed by K409. Position 461 is a phosphoserine (S461).

Belongs to the UDPGP type 1 family.

Its subcellular location is the cytoplasm. The catalysed reaction is N-acetyl-alpha-D-glucosamine 1-phosphate + UTP + H(+) = UDP-N-acetyl-alpha-D-glucosamine + diphosphate. It functions in the pathway nucleotide-sugar biosynthesis; UDP-N-acetyl-alpha-D-glucosamine biosynthesis; UDP-N-acetyl-alpha-D-glucosamine from N-acetyl-alpha-D-glucosamine 1-phosphate: step 1/1. Its function is as follows. UDP-N-acetylglucosamine pyrophosphorylase that utilizes N-acetylglucosamine-1-phosphate as substrate. Together with AGM1, is involved in the production of UDP-N-acetylglucosamine from N-acetylglucosamine-6-phosphate. The sequence is that of UDP-N-acetylglucosamine pyrophosphorylase (QRI1) from Saccharomyces cerevisiae (strain ATCC 204508 / S288c) (Baker's yeast).